We begin with the raw amino-acid sequence, 142 residues long: Succinate dehydrogenase assembly factor 2, mitochondrial (142 aa).

The protein belongs to the SDHAF2 family. In terms of assembly, interacts with the flavoprotein subunit within the SDH catalytic dimer.

The protein resides in the mitochondrion matrix. Its function is as follows. Plays an essential role in the assembly of succinate dehydrogenase (SDH), an enzyme complex (also referred to as respiratory complex II) that is a component of both the tricarboxylic acid (TCA) cycle and the mitochondrial electron transport chain, and which couples the oxidation of succinate to fumarate with the reduction of ubiquinone (coenzyme Q) to ubiquinol. Required for flavinylation (covalent attachment of FAD) of the flavoprotein subunit of the SDH catalytic dimer. The chain is Succinate dehydrogenase assembly factor 2, mitochondrial from Debaryomyces hansenii (strain ATCC 36239 / CBS 767 / BCRC 21394 / JCM 1990 / NBRC 0083 / IGC 2968) (Yeast).